We begin with the raw amino-acid sequence, 655 residues long: A-type voltage-gated potassium channel KCND3 (655 aa).

Over 1 to 182 the chain is Cytoplasmic; the sequence is MAAGVAAWLP…FENPHTSTLA (182 aa). Residues 6 to 21 form an interaction with KCNIP1 and KCNIP2 region; it reads AAWLPFARAAAIGWMP. Residues 70-78 form an interaction with KCNIP1 region; sequence EKEFFFNED. Positions 104, 110, 131, and 132 each coordinate Zn(2+). A Phosphoserine modification is found at Ser-153. A helical transmembrane segment spans residues 183-204; the sequence is LVFYYVTGFFIAVSVITNVVET. Residues 205 to 223 lie on the Extracellular side of the membrane; sequence VPCGTVPGSKELPCGERYS. Residues 224-246 form a helical membrane-spanning segment; sequence VAFFCLDTACVMIFTVEYLLRLF. Topologically, residues 247–253 are cytoplasmic; that stretch reads AAPSRYR. Residues 254 to 277 traverse the membrane as a helical segment; that stretch reads FIRSVMSIIDVVAIMPYYIGLVMT. Residues 278 to 283 are Extracellular-facing; it reads NNEDVS. A helical; Voltage-sensor membrane pass occupies residues 284 to 306; that stretch reads GAFVTLRVFRVFRIFKFSRHSQG. Residues 307–318 lie on the Cytoplasmic side of the membrane; it reads LRILGYTLKSCA. The helical transmembrane segment at 319 to 343 threads the bilayer; that stretch reads SELGFLLFSLTMAIIIFATVMFYAE. At 344-352 the chain is on the extracellular side; that stretch reads KGSSASKFT. Positions 353–366 form an intramembrane region, helical; it reads SIPASFWYTIVTMT. The K(+) site is built by Thr-367, Leu-368, Gly-369, and Tyr-370. Positions 367–372 match the Selectivity filter motif; sequence TLGYGD. The stretch at 367-374 is an intramembrane region; that stretch reads TLGYGDMV. The chain crosses the membrane as a helical span at residues 378-400; that stretch reads IAGKIFGSICSLSGVLVIALPVP. Residues 401–655 are Cytoplasmic-facing; the sequence is VIVSNFSRIY…TSNVVKVSAL (255 aa). Phosphothreonine is present on Thr-459. Residues 470-487 form an interaction with KCNIP1 and KCNIP2 region; that stretch reads SLIESQHHHLLHCLEKTT. Residues 472 to 487 are mediates dendritic targeting; it reads IESQHHHLLHCLEKTT. The segment at 523–565 is disordered; it reads SSMQNYPSTRSPSLSSHSGLTTTCCSRRSKKTTHLPNSNLPAT. Residues 529 to 548 show a composition bias toward low complexity; the sequence is PSTRSPSLSSHSGLTTTCCS. Ser-569 and Ser-585 each carry phosphoserine. Positions 615 to 655 are disordered; the sequence is ISIPTPPALTPEGESRPPPASPGPNTNIPSITSNVVKVSAL. Over residues 637 to 655 the composition is skewed to polar residues; sequence GPNTNIPSITSNVVKVSAL.

It belongs to the potassium channel family. D (Shal) (TC 1.A.1.2) subfamily. Kv4.3/KCND3 sub-subfamily. As to quaternary structure, homotetramer. Heterotetramer with KCND2. Associates with the regulatory subunit KCNIP3. Associates with the regulatory subunit KCNIP4. Interacts with KCNE1, KCNE2, SCN1B and KCNAB1 and DLG1. Component of heteromultimeric potassium channels. Identified in potassium channel complexes containing KCND1, KCND2, KCND3, KCNIP1, KCNIP2, KCNIP3, KCNIP4, DPP6 and DPP10. Interacts with KCNIP1; each KCNIP1 monomer interacts with two adjacent KCND3 subunits, through both the N-terminal inactivation ball of a KCND3 subunit and a C-terminal helix from the adjacent KCND3 subunit, clamping them together; this interaction stabilizes the tetrameric form and modulates the channel gating kinetics namely channel activation and inactivation kinetics and rate of recovery from inactivation. Interacts with DPP6; this interaction modulates the channel gating kinetics namely channel activation and inactivation kinetics and rate of recovery from inactivation. Interacts with KCNIP2; each KCNIP2 monomer interacts with two adjacent KCND3 subunits, through both the N-terminal inactivation ball of a KCND3 subunit and a C-terminal helix from the adjacent KCND3 subunit, clamping them together; this interaction modulates the channel gating kinetics. In terms of processing, regulated through phosphorylation at Ser-569 by CaMK2D.

The protein localises to the cell membrane. It localises to the sarcolemma. It is found in the cell projection. The protein resides in the dendrite. It carries out the reaction K(+)(in) = K(+)(out). Its function is as follows. Pore-forming (alpha) subunit of voltage-gated A-type potassium channels that mediates transmembrane potassium transport in excitable membranes, in brain and heart. In cardiomyocytes, may generate the transient outward potassium current I(To). In neurons, may conduct the transient subthreshold somatodendritic A-type potassium current (ISA). Kinetics properties are characterized by fast activation at subthreshold membrane potentials, rapid inactivation, and quick recovery from inactivation. Channel properties are modulated by interactions with regulatory subunits. Interaction with the regulatory subunits KCNIP1 or KCNIP2 modulates the channel gating kinetics namely channel activation and inactivation kinetics and rate of recovery from inactivation. Likewise, interaction with DPP6 modulates the channel gating kinetics namely channel activation and inactivation kinetics. In Mus musculus (Mouse), this protein is A-type voltage-gated potassium channel KCND3.